The sequence spans 96 residues: Co-chaperonin GroES (96 aa).

This sequence belongs to the GroES chaperonin family. In terms of assembly, heptamer of 7 subunits arranged in a ring. Interacts with the chaperonin GroEL.

Its subcellular location is the cytoplasm. In terms of biological role, together with the chaperonin GroEL, plays an essential role in assisting protein folding. The GroEL-GroES system forms a nano-cage that allows encapsulation of the non-native substrate proteins and provides a physical environment optimized to promote and accelerate protein folding. GroES binds to the apical surface of the GroEL ring, thereby capping the opening of the GroEL channel. The chain is Co-chaperonin GroES from Shewanella halifaxensis (strain HAW-EB4).